The following is a 440-amino-acid chain: Chaperone SurA (440 aa).

The N-terminal stretch at 1–25 (MGTKLSSRSPFSLPFLTLLAGMAIA) is a signal peptide. 2 PpiC domains span residues 182 to 283 (SDEY…KLVE) and 294 to 392 (IDQT…QVIE).

Its subcellular location is the periplasm. The enzyme catalyses [protein]-peptidylproline (omega=180) = [protein]-peptidylproline (omega=0). In terms of biological role, chaperone involved in the correct folding and assembly of outer membrane proteins. Recognizes specific patterns of aromatic residues and the orientation of their side chains, which are found more frequently in integral outer membrane proteins. May act in both early periplasmic and late outer membrane-associated steps of protein maturation. The polypeptide is Chaperone SurA (Nitrosospira multiformis (strain ATCC 25196 / NCIMB 11849 / C 71)).